The primary structure comprises 662 residues: UvrABC system protein B (662 aa).

In terms of domain architecture, Helicase ATP-binding spans 31-188; it reads DNIEGGEKAQ…NDLVDIQFER (158 aa). 44 to 51 lines the ATP pocket; the sequence is GATGTGKT. Residues 97-120 carry the Beta-hairpin motif; sequence YYDYYQPEAYVPSSDTYIEKDSSV. One can recognise a Helicase C-terminal domain in the interval 435 to 601; the sequence is QIDDLLGEIN…TIKKEIRDLI (167 aa). Positions 626–661 constitute a UVR domain; the sequence is KELVKKLEKQMQEAVEVLDFELAAQIRDMMLEVKAL.

Belongs to the UvrB family. As to quaternary structure, forms a heterotetramer with UvrA during the search for lesions. Interacts with UvrC in an incision complex.

It localises to the cytoplasm. Its function is as follows. The UvrABC repair system catalyzes the recognition and processing of DNA lesions. A damage recognition complex composed of 2 UvrA and 2 UvrB subunits scans DNA for abnormalities. Upon binding of the UvrA(2)B(2) complex to a putative damaged site, the DNA wraps around one UvrB monomer. DNA wrap is dependent on ATP binding by UvrB and probably causes local melting of the DNA helix, facilitating insertion of UvrB beta-hairpin between the DNA strands. Then UvrB probes one DNA strand for the presence of a lesion. If a lesion is found the UvrA subunits dissociate and the UvrB-DNA preincision complex is formed. This complex is subsequently bound by UvrC and the second UvrB is released. If no lesion is found, the DNA wraps around the other UvrB subunit that will check the other stand for damage. This is UvrABC system protein B from Streptococcus pneumoniae (strain Hungary19A-6).